A 371-amino-acid polypeptide reads, in one-letter code: Beta-1,3-galactosyltransferase 4 (371 aa).

The Cytoplasmic portion of the chain corresponds to 1 to 4 (MPLS). Residues 5–25 (LFRRVLLAVLLLVIIWTLFGP) traverse the membrane as a helical; Signal-anchor for type II membrane protein segment. Residues 26–371 (SGLGEELLSL…RCRFIAWFSS (346 aa)) lie on the Lumenal side of the membrane. Asn-143 carries an N-linked (GlcNAc...) asparagine glycan.

Belongs to the glycosyltransferase 31 family. Expressed in heart, brain, spleen, kidney, lung and testis.

The protein resides in the golgi apparatus membrane. The enzyme catalyses a ganglioside GM2 (d18:1(4E)) + UDP-alpha-D-galactose = a ganglioside GM1 (d18:1(4E)) + UDP + H(+). It carries out the reaction a ganglioside GM2 + UDP-alpha-D-galactose = a ganglioside GM1 + UDP + H(+). The catalysed reaction is a ganglioside GD2 (d18:1(4E)) + UDP-alpha-D-galactose = a ganglioside GD1b (d18:1(4E)) + UDP + H(+). It catalyses the reaction a ganglioside GA2 (d18:1(4E)) + UDP-alpha-D-galactose = a ganglioside GA1 (d18:1(4E)) + UDP + H(+). It functions in the pathway protein modification; protein glycosylation. Functionally, involved in GM1/GD1B/GA1 ganglioside biosynthesis. This chain is Beta-1,3-galactosyltransferase 4, found in Mus musculus (Mouse).